The chain runs to 358 residues: Methylthioribose-1-phosphate isomerase (358 aa).

Methionine 1 carries the N-acetylmethionine modification. Catalysis depends on aspartate 248, which acts as the Proton donor.

This sequence belongs to the eIF-2B alpha/beta/delta subunits family. MtnA subfamily.

It localises to the cytoplasm. It is found in the nucleus. The catalysed reaction is 5-(methylsulfanyl)-alpha-D-ribose 1-phosphate = 5-(methylsulfanyl)-D-ribulose 1-phosphate. The protein operates within amino-acid biosynthesis; L-methionine biosynthesis via salvage pathway; L-methionine from S-methyl-5-thio-alpha-D-ribose 1-phosphate: step 1/6. Functionally, catalyzes the interconversion of methylthioribose-1-phosphate (MTR-1-P) into methylthioribulose-1-phosphate (MTRu-1-P). The chain is Methylthioribose-1-phosphate isomerase from Bos taurus (Bovine).